Here is a 238-residue protein sequence, read N- to C-terminus: Cysteine-rich venom protein pseudechetoxin-like (238 aa).

Residues 1-19 (MIAFIVLLSLAAVLQQSSG) form the signal peptide. The propeptide occupies 20 to 28 (TVDFASESS). The 127-residue stretch at 38–164 (VDKHNDLRRS…STKYLYVCQY (127 aa)) folds into the SCP domain. Intrachain disulfides connect Cys75–Cys153, Cys92–Cys165, Cys148–Cys162, Cys184–Cys191, Cys187–Cys196, Cys200–Cys233, Cys209–Cys227, and Cys218–Cys231. One can recognise a ShKT domain in the interval 200-233 (CKHNDDLSNCKPLAKKSKCQTEWIKSKCPATCFC).

This sequence belongs to the CRISP family. As to expression, expressed by the venom gland.

It is found in the secreted. Functionally, blocks olfactory (CNGA2) and retinal (CNGA1) CNG channel currents. Does not affect neither depolarization- nor caffeine-induced contraction of smooth muscle. This is Cysteine-rich venom protein pseudechetoxin-like from Oxyuranus microlepidotus (Inland taipan).